Consider the following 194-residue polypeptide: Large ribosomal subunit protein eL15 (194 aa).

Residues 160–194 (RGLTSAGKKGRGLMYKGKGTEKVRPSVRANSKKAK) form a disordered region.

This sequence belongs to the eukaryotic ribosomal protein eL15 family.

This is Large ribosomal subunit protein eL15 from Methanococcus maripaludis (strain C7 / ATCC BAA-1331).